The primary structure comprises 200 residues: Small ribosomal subunit protein uS4 (200 aa).

The region spanning 91–150 is the S4 RNA-binding domain; the sequence is TRLDNVVYRLGITPTRRSARQLVSHKHITVNGKIVNIPSYALKVGDIIGLTEKTKSSNAI.

Belongs to the universal ribosomal protein uS4 family. In terms of assembly, part of the 30S ribosomal subunit. Contacts protein S5. The interaction surface between S4 and S5 is involved in control of translational fidelity.

Its function is as follows. One of the primary rRNA binding proteins, it binds directly to 16S rRNA where it nucleates assembly of the body of the 30S subunit. In terms of biological role, with S5 and S12 plays an important role in translational accuracy. This is Small ribosomal subunit protein uS4 from Amoebophilus asiaticus (strain 5a2).